The sequence spans 293 residues: uncharacterized protein (293 aa).

The HTH lysR-type domain occupies 1 to 58 (MQLQELHMLVVLAEELNMRKAAERLFVSQPALSQRLQTIEKAWGTKIFLRSQKGLTVT). Residues 18–37 (MRKAAERLFVSQPALSQRLQ) constitute a DNA-binding region (H-T-H motif).

It belongs to the LysR transcriptional regulatory family.

This is an uncharacterized protein from Bacillus subtilis (strain 168).